We begin with the raw amino-acid sequence, 145 residues long: MQEVTIYSDGACKGNPGRGGWGAVLVAGASEKEMFGGEPNTTNNRMEMTAVIEALRALKRPCVVRVYTDSQYVQKGISEWLPGWKARGWKTADKKPVKNADLWQELDTLAQPHQISWHWVRGHNGHPGNERADALANRGVESIGR.

In terms of domain architecture, RNase H type-1 spans 1 to 141 (MQEVTIYSDG…ADALANRGVE (141 aa)). Residues Asp-9, Glu-47, Asp-69, and Asp-133 each contribute to the Mg(2+) site.

It belongs to the RNase H family. Monomer. It depends on Mg(2+) as a cofactor.

It is found in the cytoplasm. The enzyme catalyses Endonucleolytic cleavage to 5'-phosphomonoester.. In terms of biological role, endonuclease that specifically degrades the RNA of RNA-DNA hybrids. The chain is Ribonuclease H from Cupriavidus necator (strain ATCC 17699 / DSM 428 / KCTC 22496 / NCIMB 10442 / H16 / Stanier 337) (Ralstonia eutropha).